The primary structure comprises 196 residues: ATP-dependent Clp protease proteolytic subunit (196 aa).

The active-site Nucleophile is the Ser-101. The active site involves His-126.

Belongs to the peptidase S14 family. In terms of assembly, component of the chloroplastic Clp protease core complex.

Its subcellular location is the plastid. It is found in the chloroplast stroma. It catalyses the reaction Hydrolysis of proteins to small peptides in the presence of ATP and magnesium. alpha-casein is the usual test substrate. In the absence of ATP, only oligopeptides shorter than five residues are hydrolyzed (such as succinyl-Leu-Tyr-|-NHMec, and Leu-Tyr-Leu-|-Tyr-Trp, in which cleavage of the -Tyr-|-Leu- and -Tyr-|-Trp bonds also occurs).. Cleaves peptides in various proteins in a process that requires ATP hydrolysis. Has a chymotrypsin-like activity. Plays a major role in the degradation of misfolded proteins. The sequence is that of ATP-dependent Clp protease proteolytic subunit from Vitis vinifera (Grape).